A 414-amino-acid polypeptide reads, in one-letter code: Serine hydroxymethyltransferase (414 aa).

(6S)-5,6,7,8-tetrahydrofolate is bound by residues Leu-116 and 120–122 (GHL). An N6-(pyridoxal phosphate)lysine modification is found at Lys-224. Residues Glu-240 and 348-350 (SPF) contribute to the (6S)-5,6,7,8-tetrahydrofolate site.

The protein belongs to the SHMT family. Homodimer. Pyridoxal 5'-phosphate serves as cofactor.

It localises to the cytoplasm. The catalysed reaction is (6R)-5,10-methylene-5,6,7,8-tetrahydrofolate + glycine + H2O = (6S)-5,6,7,8-tetrahydrofolate + L-serine. The protein operates within one-carbon metabolism; tetrahydrofolate interconversion. Its pathway is amino-acid biosynthesis; glycine biosynthesis; glycine from L-serine: step 1/1. In terms of biological role, catalyzes the reversible interconversion of serine and glycine with tetrahydrofolate (THF) serving as the one-carbon carrier. This reaction serves as the major source of one-carbon groups required for the biosynthesis of purines, thymidylate, methionine, and other important biomolecules. Also exhibits THF-independent aldolase activity toward beta-hydroxyamino acids, producing glycine and aldehydes, via a retro-aldol mechanism. The chain is Serine hydroxymethyltransferase from Campylobacter concisus (strain 13826).